Reading from the N-terminus, the 352-residue chain is Histidine biosynthesis bifunctional protein HisB (352 aa).

The segment at 1 to 163 (MKKILFIDRD…MVASAIINDA (163 aa)) is histidinol-phosphatase. Aspartate 8 functions as the Nucleophile in the catalytic mechanism. Mg(2+) contacts are provided by aspartate 8 and aspartate 10. Aspartate 10 (proton donor) is an active-site residue. Zn(2+) is bound by residues cysteine 91, histidine 93, cysteine 99, and cysteine 101. Aspartate 128 serves as a coordination point for Mg(2+). An imidazoleglycerol-phosphate dehydratase region spans residues 164–352 (RKASVQRKTK…NYLPSTKGVL (189 aa)).

It in the N-terminal section; belongs to the histidinol-phosphatase family. This sequence in the C-terminal section; belongs to the imidazoleglycerol-phosphate dehydratase family. Mg(2+) is required as a cofactor. It depends on Zn(2+) as a cofactor.

It is found in the cytoplasm. The catalysed reaction is D-erythro-1-(imidazol-4-yl)glycerol 3-phosphate = 3-(imidazol-4-yl)-2-oxopropyl phosphate + H2O. The enzyme catalyses L-histidinol phosphate + H2O = L-histidinol + phosphate. The protein operates within amino-acid biosynthesis; L-histidine biosynthesis; L-histidine from 5-phospho-alpha-D-ribose 1-diphosphate: step 6/9. It participates in amino-acid biosynthesis; L-histidine biosynthesis; L-histidine from 5-phospho-alpha-D-ribose 1-diphosphate: step 8/9. This is Histidine biosynthesis bifunctional protein HisB from Legionella pneumophila subsp. pneumophila (strain Philadelphia 1 / ATCC 33152 / DSM 7513).